Here is a 155-residue protein sequence, read N- to C-terminus: Small ribosomal subunit protein uS7c (155 aa).

It belongs to the universal ribosomal protein uS7 family. Part of the 30S ribosomal subunit.

The protein localises to the plastid. Its subcellular location is the chloroplast. One of the primary rRNA binding proteins, it binds directly to 16S rRNA where it nucleates assembly of the head domain of the 30S subunit. The polypeptide is Small ribosomal subunit protein uS7c (rps7) (Typha angustifolia (Narrow leaf cattail)).